Reading from the N-terminus, the 138-residue chain is Large ribosomal subunit protein uL14m (138 aa).

It belongs to the universal ribosomal protein uL14 family. Component of the mitochondrial large ribosomal subunit (mt-LSU). Mature yeast 74S mitochondrial ribosomes consist of a small (37S) and a large (54S) subunit. The 37S small subunit contains a 15S ribosomal RNA (15S mt-rRNA) and 34 different proteins. The 54S large subunit contains a 21S rRNA (21S mt-rRNA) and 46 different proteins.

The protein resides in the mitochondrion. Component of the mitochondrial ribosome (mitoribosome), a dedicated translation machinery responsible for the synthesis of mitochondrial genome-encoded proteins, including at least some of the essential transmembrane subunits of the mitochondrial respiratory chain. The mitoribosomes are attached to the mitochondrial inner membrane and translation products are cotranslationally integrated into the membrane. The sequence is that of Large ribosomal subunit protein uL14m (MRPL38) from Saccharomyces cerevisiae (strain ATCC 204508 / S288c) (Baker's yeast).